Consider the following 546-residue polypeptide: Phosphomethylpyrimidine synthase (546 aa).

Over residues Met-1 to Ile-19 the composition is skewed to polar residues. The interval Met-1 to Gln-20 is disordered. Substrate is bound by residues Asn-146, Met-175, Tyr-204, His-240, Ser-260–Gly-262, Asp-301–Arg-304, and Glu-340. His-344 contributes to the Zn(2+) binding site. Residue Tyr-367 participates in substrate binding. His-408 provides a ligand contact to Zn(2+). Cys-488, Cys-491, and Cys-496 together coordinate [4Fe-4S] cluster.

The protein belongs to the ThiC family. It depends on [4Fe-4S] cluster as a cofactor.

It catalyses the reaction 5-amino-1-(5-phospho-beta-D-ribosyl)imidazole + S-adenosyl-L-methionine = 4-amino-2-methyl-5-(phosphooxymethyl)pyrimidine + CO + 5'-deoxyadenosine + formate + L-methionine + 3 H(+). It functions in the pathway cofactor biosynthesis; thiamine diphosphate biosynthesis. Functionally, catalyzes the synthesis of the hydroxymethylpyrimidine phosphate (HMP-P) moiety of thiamine from aminoimidazole ribotide (AIR) in a radical S-adenosyl-L-methionine (SAM)-dependent reaction. This is Phosphomethylpyrimidine synthase from Mycobacteroides abscessus (strain ATCC 19977 / DSM 44196 / CCUG 20993 / CIP 104536 / JCM 13569 / NCTC 13031 / TMC 1543 / L948) (Mycobacterium abscessus).